We begin with the raw amino-acid sequence, 117 residues long: Photosystem II reaction center Psb28 protein (117 aa).

This sequence belongs to the Psb28 family. Part of the photosystem II complex.

The protein resides in the cellular thylakoid membrane. This Prochlorococcus marinus (strain MIT 9515) protein is Photosystem II reaction center Psb28 protein.